Consider the following 244-residue polypeptide: tRNA (guanine-N(1)-)-methyltransferase (244 aa).

S-adenosyl-L-methionine is bound by residues glycine 111 and 130–135; that span reads IGDYVL.

Belongs to the RNA methyltransferase TrmD family. As to quaternary structure, homodimer.

Its subcellular location is the cytoplasm. The catalysed reaction is guanosine(37) in tRNA + S-adenosyl-L-methionine = N(1)-methylguanosine(37) in tRNA + S-adenosyl-L-homocysteine + H(+). Its function is as follows. Specifically methylates guanosine-37 in various tRNAs. This chain is tRNA (guanine-N(1)-)-methyltransferase, found in Phytoplasma australiense.